The chain runs to 532 residues: Membrane protein insertase YidC (532 aa).

Helical transmembrane passes span Phe-7–Met-27, Leu-336–Ile-356, Gly-413–Ile-433, Leu-450–Ile-470, and Pro-492–Ile-512.

The protein belongs to the OXA1/ALB3/YidC family. Type 1 subfamily. Interacts with the Sec translocase complex via SecD. Specifically interacts with transmembrane segments of nascent integral membrane proteins during membrane integration.

Its subcellular location is the cell membrane. Functionally, required for the insertion and/or proper folding and/or complex formation of integral membrane proteins into the membrane. Involved in integration of membrane proteins that insert both dependently and independently of the Sec translocase complex, as well as at least some lipoproteins. Aids folding of multispanning membrane proteins. The sequence is that of Membrane protein insertase YidC from Buchnera aphidicola subsp. Acyrthosiphon pisum (strain Tuc7).